A 488-amino-acid polypeptide reads, in one-letter code: Ribulose bisphosphate carboxylase large chain (488 aa).

Asn-127 and Thr-177 together coordinate substrate. Lys-179 functions as the Proton acceptor in the catalytic mechanism. Residue Lys-181 participates in substrate binding. Mg(2+) contacts are provided by Lys-205, Asp-207, and Glu-208. Lys-205 bears the N6-carboxylysine mark. The active-site Proton acceptor is His-297. Positions 298, 330, and 382 each coordinate substrate.

The protein belongs to the RuBisCO large chain family. Type I subfamily. In terms of assembly, heterohexadecamer of 8 large chains and 8 small chains. Mg(2+) serves as cofactor.

It localises to the plastid. The protein resides in the chloroplast. It catalyses the reaction 2 (2R)-3-phosphoglycerate + 2 H(+) = D-ribulose 1,5-bisphosphate + CO2 + H2O. The catalysed reaction is D-ribulose 1,5-bisphosphate + O2 = 2-phosphoglycolate + (2R)-3-phosphoglycerate + 2 H(+). Functionally, ruBisCO catalyzes two reactions: the carboxylation of D-ribulose 1,5-bisphosphate, the primary event in carbon dioxide fixation, as well as the oxidative fragmentation of the pentose substrate in the photorespiration process. Both reactions occur simultaneously and in competition at the same active site. This is Ribulose bisphosphate carboxylase large chain from Pyropia yezoensis (Susabi-nori).